Here is a 263-residue protein sequence, read N- to C-terminus: MRILVSNDDGILAQGIRTLANTLHRAGHTVTVVCPDRERSATGHALTMHKPLRAEAVENLFEPGLAAWAINGTPSDSVKLGLDALLGERPDLVVSGINCGANLGSDVLYSGTVSAAMEGTIEGLPSIAVSLASRVRCDFQPAADFLVRFVRALEVQPLPEAFLLNVNVPALPESEILGARVCRLGMRRYRDQFVKRVDPRGVNYYWLAGEVIESEEAPDSDVVAVGEGCIAITPLKYDLTYEPGIGLLGARQWEKIFDPLAGG.

Residues Asp8, Asp9, Ser40, and Asn98 each contribute to the a divalent metal cation site.

Belongs to the SurE nucleotidase family. It depends on a divalent metal cation as a cofactor.

It localises to the cytoplasm. It carries out the reaction a ribonucleoside 5'-phosphate + H2O = a ribonucleoside + phosphate. In terms of biological role, nucleotidase that shows phosphatase activity on nucleoside 5'-monophosphates. The chain is 5'-nucleotidase SurE from Gloeobacter violaceus (strain ATCC 29082 / PCC 7421).